The following is a 234-amino-acid chain: MPIHDWPEQERPREKLMARGPTALSDAELLALFLGSGFGGRDAVQTARDLLQAHGPLRVLLDRPARELARLPGLGPARSCTLAAGLELAHRYLAAELEHGEAVGNNPAAVGRYLQHRLRGQAREIFMALFLDNRHRLIACEELFHGTINAAPVYPREVVRRALLHNAAAVILSHNHPSGDPEPSSADTRITDELQQALAMVDVRLLDHFVVGEGRPVSFAERGLLSPPQPRLFG.

An MPN domain is found at 103–225 (VGNNPAAVGR…PVSFAERGLL (123 aa)). Residues His-174, His-176, and Asp-187 each contribute to the Zn(2+) site. Positions 174–187 (HNHPSGDPEPSSAD) match the JAMM motif motif.

It belongs to the UPF0758 family.

This chain is UPF0758 protein Smal_0281, found in Stenotrophomonas maltophilia (strain R551-3).